Consider the following 55-residue polypeptide: Major pollen allergen Dac g 4 (55 aa).

This chain is Major pollen allergen Dac g 4, found in Dactylis glomerata (Orchard grass).